Consider the following 938-residue polypeptide: Scm-like with four MBT domains protein 2 (938 aa).

A disordered region spans residues 1–32 (MERYLPVSKKRNSSSSLEKITGSANGNGTLYS). Over residues 13 to 30 (SSSSLEKITGSANGNGTL) the composition is skewed to polar residues. 4 MBT repeats span residues 43–143 (FSWG…LRPP), 151–255 (SDWT…MDPP), 265–371 (FEWK…LAPP), and 379–475 (FNWV…LTTP). The disordered stretch occupies residues 742–836 (PEGIPESLPE…TVPTTASSNN (95 aa)). Basic and acidic residues-rich tracts occupy residues 765–777 (TEQE…DTAR) and 809–822 (RNSE…VERA). The SAM domain occupies 868-931 (WSVTDVVRFI…CHQIERVKVA (64 aa)).

As to quaternary structure, interacts with YY1. Interacts with methylated histones H3K9me2 and H4K20me2. Expressed in testis and, at much lower levels, in ovary.

It is found in the nucleus. Transcriptional repressor of HOXB13 gene. The protein is Scm-like with four MBT domains protein 2 (Sfmbt2) of Mus musculus (Mouse).